Consider the following 132-residue polypeptide: Nickel-responsive regulator (132 aa).

4 residues coordinate Ni(2+): histidine 76, histidine 87, histidine 89, and cysteine 95.

Belongs to the transcriptional regulatory CopG/NikR family. Homotetramer. It depends on Ni(2+) as a cofactor.

Transcriptional repressor of the nikABCDE operon. Is active in the presence of excessive concentrations of intracellular nickel. This Klebsiella pneumoniae subsp. pneumoniae (strain ATCC 700721 / MGH 78578) protein is Nickel-responsive regulator.